Here is a 54-residue protein sequence, read N- to C-terminus: UPF0434 protein BCI_0256 (54 aa).

Belongs to the UPF0434 family.

The protein is UPF0434 protein BCI_0256 of Baumannia cicadellinicola subsp. Homalodisca coagulata.